Reading from the N-terminus, the 188-residue chain is MRQYCLLLIVLALAAALSDNAVASTLAVARSEIGAPSAVYSERLLRSEPQDEDTFEDRAFGLNWLRLRWLRLGAAKAKTTDVISARESKWIEAWANKNLSPNYVYKQLGLAKQGDKAMQSQNYRIFEAYTERLFAKDQALYTKWLDAKMTPEDVYKALKLDKLLGAKAANSPDFRRYEVYMFKWHELN.

The N-terminal stretch at Met1–Ala16 is a signal peptide. The short motif at Arg43–Arg58 is the RxLR-dEER element. A Host plasma membrane localization motif motif is present at residues Gly73–Lys78.

This sequence belongs to the RxLR effector family.

Its subcellular location is the secreted. It localises to the host cell membrane. In terms of biological role, effector that triggers cell death in a variety of plant species (including tobacco, tomato and soybean), regardless of the Rps genes present. Avh241 interacts with the plant immune system via at least two different mechanisms, one recognized by plants dependent on subcellular localization and one promoting infection independent on membrane localization. The cell death triggered by Avh241 in N.benthamiana requires the two host mitogen-activated protein kinases, MEK2 and WIPK. The sequence is that of RxLR effector protein Avh241 from Phytophthora sojae (strain P6497) (Soybean stem and root rot agent).